The primary structure comprises 310 residues: Protoheme IX farnesyltransferase (310 aa).

9 consecutive transmembrane segments (helical) span residues 26–46 (VMSLVVFTALVGLLVAPATVH), 47–67 (PMIALTGILFIALGAGASGAL), 95–115 (GEALGLGLALSGIAVVMLGLA), 118–138 (LFAAGLLAFTIFFYAVVYSMW), 147–167 (IVIGGAAGAFPPMIGWAVATG), 174–194 (LFMFALIFMWTPPHFWSLALF), 220–240 (VLAYALLLAPLAVAGAFTGIG), 243–263 (LYLVVALALNGWLLRGAVRIW), and 281–301 (FFRFSLYYLFLHFGAILAEAA).

It belongs to the UbiA prenyltransferase family. Protoheme IX farnesyltransferase subfamily. Interacts with CtaA.

It localises to the cell inner membrane. It carries out the reaction heme b + (2E,6E)-farnesyl diphosphate + H2O = Fe(II)-heme o + diphosphate. It functions in the pathway porphyrin-containing compound metabolism; heme O biosynthesis; heme O from protoheme: step 1/1. Converts heme B (protoheme IX) to heme O by substitution of the vinyl group on carbon 2 of heme B porphyrin ring with a hydroxyethyl farnesyl side group. This is Protoheme IX farnesyltransferase from Cereibacter sphaeroides (strain ATCC 17025 / ATH 2.4.3) (Rhodobacter sphaeroides).